The chain runs to 37 residues: Large ribosomal subunit protein bL36 (37 aa).

This sequence belongs to the bacterial ribosomal protein bL36 family.

This chain is Large ribosomal subunit protein bL36, found in Shewanella woodyi (strain ATCC 51908 / MS32).